The chain runs to 190 residues: 6,7-dimethyl-8-ribityllumazine synthase (190 aa).

5-amino-6-(D-ribitylamino)uracil-binding positions include tryptophan 31, 65–67, and 89–91; these read SFE and CVI. 94–95 contacts (2S)-2-hydroxy-3-oxobutyl phosphate; that stretch reads ET. The active-site Proton donor is histidine 97. A 5-amino-6-(D-ribitylamino)uracil-binding site is contributed by phenylalanine 122. Arginine 136 lines the (2S)-2-hydroxy-3-oxobutyl phosphate pocket.

Belongs to the DMRL synthase family.

It catalyses the reaction (2S)-2-hydroxy-3-oxobutyl phosphate + 5-amino-6-(D-ribitylamino)uracil = 6,7-dimethyl-8-(1-D-ribityl)lumazine + phosphate + 2 H2O + H(+). It participates in cofactor biosynthesis; riboflavin biosynthesis; riboflavin from 2-hydroxy-3-oxobutyl phosphate and 5-amino-6-(D-ribitylamino)uracil: step 1/2. In terms of biological role, catalyzes the formation of 6,7-dimethyl-8-ribityllumazine by condensation of 5-amino-6-(D-ribitylamino)uracil with 3,4-dihydroxy-2-butanone 4-phosphate. This is the penultimate step in the biosynthesis of riboflavin. This Flavobacterium johnsoniae (strain ATCC 17061 / DSM 2064 / JCM 8514 / BCRC 14874 / CCUG 350202 / NBRC 14942 / NCIMB 11054 / UW101) (Cytophaga johnsonae) protein is 6,7-dimethyl-8-ribityllumazine synthase.